Here is a 226-residue protein sequence, read N- to C-terminus: Ribose-5-phosphate isomerase A (226 aa).

Residues 33–36, 86–89, and 99–102 each bind substrate; these read TGST, DGAD, and KGGG. E108 serves as the catalytic Proton acceptor. K126 is a substrate binding site.

This sequence belongs to the ribose 5-phosphate isomerase family. Homodimer.

It carries out the reaction aldehydo-D-ribose 5-phosphate = D-ribulose 5-phosphate. The protein operates within carbohydrate degradation; pentose phosphate pathway; D-ribose 5-phosphate from D-ribulose 5-phosphate (non-oxidative stage): step 1/1. Catalyzes the reversible conversion of ribose-5-phosphate to ribulose 5-phosphate. The polypeptide is Ribose-5-phosphate isomerase A (Bordetella bronchiseptica (strain ATCC BAA-588 / NCTC 13252 / RB50) (Alcaligenes bronchisepticus)).